A 151-amino-acid chain; its full sequence is Ubiquitin-conjugating enzyme E2 W (151 aa).

Met-1 is covalently cross-linked (Peptide (Met-Gly) (interchain with G-Cter in ubiquitin)). Positions 3–151 (SMQKRLQKEL…TKWWYHDDTC (149 aa)) constitute a UBC core domain. The active-site Glycyl thioester intermediate is the Cys-91.

It belongs to the ubiquitin-conjugating enzyme family. Homodimer. Interacts with FANCL. Interacts with STUB1/CHIP. Post-translationally, autoubiquitinated at Met-1.

It localises to the nucleus. The enzyme catalyses S-ubiquitinyl-[E1 ubiquitin-activating enzyme]-L-cysteine + [E2 ubiquitin-conjugating enzyme]-L-cysteine = [E1 ubiquitin-activating enzyme]-L-cysteine + S-ubiquitinyl-[E2 ubiquitin-conjugating enzyme]-L-cysteine.. The catalysed reaction is S-ubiquitinyl-[E1 ubiquitin-activating enzyme]-L-cysteine + [acceptor protein]-N-terminal-amino acid = [E1 ubiquitin-activating enzyme]-L-cysteine + N-terminal-ubiquitinyl-[acceptor protein].. It participates in protein modification; protein ubiquitination. Accepts ubiquitin from the E1 complex and catalyzes its covalent attachment to other proteins. Specifically monoubiquitinates the N-terminus of various substrates, including ATXN3, MAPT/TAU, POLR2H/RPB8 and STUB1/CHIP, by recognizing backbone atoms of disordered N-termini. Involved in degradation of misfolded chaperone substrates by mediating monoubiquitination of STUB1/CHIP, leading to recruitment of ATXN3 to monoubiquitinated STUB1/CHIP, and restriction of the length of ubiquitin chain attached to STUB1/CHIP substrates by ATXN3. After UV irradiation, but not after mitomycin-C (MMC) treatment, acts as a specific E2 ubiquitin-conjugating enzyme for the Fanconi anemia complex by associating with E3 ubiquitin-protein ligase FANCL and catalyzing monoubiquitination of FANCD2, a key step in the DNA damage pathway. In vitro catalyzes 'Lys-11'-linked polyubiquitination. UBE2W-catalyzed ubiquitination also occurs in the presence of inactive RING/U-box type E3s, i.e. lacking the active site cysteine residues to form thioester bonds with ubiquitin, or even in the absence of E3, albeit at a slower rate. This Mus musculus (Mouse) protein is Ubiquitin-conjugating enzyme E2 W (Ube2w).